The primary structure comprises 264 residues: Probable amino-acid-binding protein YxeM (264 aa).

Residues 1 to 20 (MKMKKWTVLVVAALLAVLSA) form the signal peptide. C21 carries the N-palmitoyl cysteine lipid modification. C21 is lipidated: S-diacylglycerol cysteine.

Belongs to the bacterial solute-binding protein 3 family. As to quaternary structure, the complex is composed of two ATP-binding proteins (YxeO), two transmembrane proteins (YxeN) and a solute-binding protein (YxeM).

It is found in the cell membrane. The protein localises to the membrane raft. Its function is as follows. Probably part of the ABC transporter complex YxeMNO that could be involved in amino-acid import. May transport S-methylcysteine. The chain is Probable amino-acid-binding protein YxeM (yxeM) from Bacillus subtilis (strain 168).